The following is a 300-amino-acid chain: Acetyl-coenzyme A carboxylase carboxyl transferase subunit beta 1 (300 aa).

A CoA carboxyltransferase N-terminal domain is found at 26–294 (MWVKCPSCGD…HTSAAQHVPA (269 aa)). Positions 30, 33, 49, and 51 each coordinate Zn(2+). The C4-type zinc finger occupies 30–51 (CPSCGDLIYTRQFSDNLKVCKC).

It belongs to the AccD/PCCB family. In terms of assembly, acetyl-CoA carboxylase is a heterohexamer composed of biotin carboxyl carrier protein (AccB), biotin carboxylase (AccC) and two subunits each of ACCase subunit alpha (AccA) and ACCase subunit beta (AccD). Requires Zn(2+) as cofactor.

The protein localises to the cytoplasm. It carries out the reaction N(6)-carboxybiotinyl-L-lysyl-[protein] + acetyl-CoA = N(6)-biotinyl-L-lysyl-[protein] + malonyl-CoA. It functions in the pathway lipid metabolism; malonyl-CoA biosynthesis; malonyl-CoA from acetyl-CoA: step 1/1. Component of the acetyl coenzyme A carboxylase (ACC) complex. Biotin carboxylase (BC) catalyzes the carboxylation of biotin on its carrier protein (BCCP) and then the CO(2) group is transferred by the transcarboxylase to acetyl-CoA to form malonyl-CoA. The sequence is that of Acetyl-coenzyme A carboxylase carboxyl transferase subunit beta 1 from Roseiflexus sp. (strain RS-1).